A 283-amino-acid chain; its full sequence is 1-acyl-sn-glycerol-3-phosphate acyltransferase alpha (283 aa).

The N-terminal stretch at 1 to 26 is a signal peptide; the sequence is MDLWPGAWMLLLLLFLLLLFLLPTLW. Topologically, residues 27 to 37 are lumenal; that stretch reads FCSPSAKYFFK. Residues 38–58 form a helical membrane-spanning segment; the sequence is MAFYNGWILFLAVLAIPVCAV. Topologically, residues 59–127 are cytoplasmic; that stretch reads RGRNVENMKI…PGRCVPIAKR (69 aa). Residues 104-109 carry the HXXXXD motif motif; the sequence is HQSSLD. The chain crosses the membrane as a helical span at residues 128-148; it reads ELLWAGSAGLACWLAGVIFID. The Lumenal segment spans residues 149–283; that stretch reads RKRTGDAISV…DYLKKPGGGG (135 aa). The short motif at 178 to 181 is the EGTR motif element; the sequence is EGTR.

Belongs to the 1-acyl-sn-glycerol-3-phosphate acyltransferase family. As to expression, widely expressed. Expressed in adipose tissue and at high levels in testis and pancreas. Expressed at lower levels in tissues such as heart, brain, placenta, kidney, lung, spleen, thymus, prostate, ovary, intestine, colon, leukocyte and liver.

It localises to the endoplasmic reticulum membrane. It carries out the reaction a 1-acyl-sn-glycero-3-phosphate + an acyl-CoA = a 1,2-diacyl-sn-glycero-3-phosphate + CoA. The enzyme catalyses 1-(9Z-octadecenoyl)-sn-glycero-3-phosphate + (9Z)-octadecenoyl-CoA = 1,2-di-(9Z-octadecenoyl)-sn-glycero-3-phosphate + CoA. It catalyses the reaction 1-(9Z-octadecenoyl)-sn-glycero-3-phosphate + hexadecanoyl-CoA = 1-(9Z)-octadecenoyl-2-hexadecanoyl-sn-glycero-3-phosphate + CoA. The catalysed reaction is heptadecanoyl-CoA + 1-(9Z-octadecenoyl)-sn-glycero-3-phosphate = 1-(9Z)-octadecenoyl-2-heptadecanoyl-sn-glycero-3-phosphate + CoA. It carries out the reaction 1-(9Z-octadecenoyl)-sn-glycero-3-phosphate + octadecanoyl-CoA = 1-(9Z-octadecenoyl)-2-octadecanoyl-sn-glycero-3-phosphate + CoA. The enzyme catalyses 1-(9Z-octadecenoyl)-sn-glycero-3-phosphate + (9Z,12Z)-octadecadienoyl-CoA = 1-(9Z)-octadecenoyl-2-(9Z,12Z)-octadecadienoyl-sn-glycero-3-phosphate + CoA. It catalyses the reaction 1-(9Z-octadecenoyl)-sn-glycero-3-phosphate + tetradecanoyl-CoA = 1-(9Z)-octadecenoyl-2-tetradecanoyl-sn-glycero-3-phosphate + CoA. The catalysed reaction is pentadecanoyl-CoA + 1-(9Z-octadecenoyl)-sn-glycero-3-phosphate = 1-(9Z)-octadecenoyl-2-pentadecanoyl-sn-glycero-3-phosphate + CoA. It carries out the reaction 1-hexadecanoyl-sn-glycero-3-phosphate + (9Z)-octadecenoyl-CoA = 1-hexadecanoyl-2-(9Z-octadecenoyl)-sn-glycero-3-phosphate + CoA. The enzyme catalyses 1-(9Z,12Z,15Z)-octadecatrienoyl-sn-glycero-3-phosphate + (9Z)-octadecenoyl-CoA = 1-(9Z,12Z,15Z)-octadecatrienoyl-2-(9Z)-octadecenoyl-sn-glycero-3-phosphate + CoA. It catalyses the reaction 1-(6Z,9Z,12Z-octadecatrienoyl)-sn-glycero-3-phosphate + (9Z)-octadecenoyl-CoA = (6Z,9Z,12Z)-octadecatrienoyl-2-(9Z)-octadecenoyl-sn-glycero-3-phosphate + CoA. The catalysed reaction is 1-eicosanoyl-sn-glycero-3-phosphate + (9Z)-octadecenoyl-CoA = 1-eicosanoyl-2-(9Z)-octadecenoyl-sn-glycero-3-phosphate + CoA. It carries out the reaction 1-tetradecanoyl-sn-glycerol 3-phosphate + (9Z)-octadecenoyl-CoA = 1-tetradecanoyl-2-(9Z)-octadecenoyl-sn-glycero-3-phosphate + CoA. The enzyme catalyses 1-(9Z-octadecenoyl)-sn-glycero-3-phosphate + (5Z,8Z,11Z,14Z)-eicosatetraenoyl-CoA = 1-(9Z)-octadecenoyl-2-(5Z,8Z,11Z,14Z)-eicosatetraenoyl-sn-glycero-3-phosphate + CoA. It catalyses the reaction 1-(9Z-octadecenoyl)-sn-glycero-3-phosphate + dodecanoyl-CoA = 1-(9Z)-octadecenoyl-2-dodecanoyl-sn-glycero-3-phosphate + CoA. The catalysed reaction is (6Z)-octadecenoyl-CoA + 1-(9Z-octadecenoyl)-sn-glycero-3-phosphate = 1-(9Z)-octadecenoyl-2-(6Z)-octadecenoyl-sn-glycero-3-phosphate + CoA. It carries out the reaction (11Z)-octadecenoyl-CoA + 1-(9Z-octadecenoyl)-sn-glycero-3-phosphate = 1-(9Z)-octadecenoyl-2-(11Z)-octadecenoyl-sn-glycero-3-phosphate + CoA. The enzyme catalyses (9Z)-hexadecenoyl-CoA + 1-(9Z-octadecenoyl)-sn-glycero-3-phosphate = 1-(9Z-octadecenoyl)-2-(9Z-hexadecenoyl)-sn-glycero-3-phosphate + CoA. It participates in phospholipid metabolism; CDP-diacylglycerol biosynthesis; CDP-diacylglycerol from sn-glycerol 3-phosphate: step 2/3. Functionally, converts 1-acyl-sn-glycerol-3-phosphate (lysophosphatidic acid or LPA) into 1,2-diacyl-sn-glycerol-3-phosphate (phosphatidic acid or PA) by incorporating an acyl moiety at the sn-2 position of the glycerol backbone. The sequence is that of 1-acyl-sn-glycerol-3-phosphate acyltransferase alpha (AGPAT1) from Homo sapiens (Human).